We begin with the raw amino-acid sequence, 183 residues long: Shikimate kinase (183 aa).

Residue 14–19 (GAGKTT) participates in ATP binding. Residue Thr18 participates in Mg(2+) binding. Substrate-binding residues include Asp36, Arg60, and Gly82. ATP is bound at residue Arg120. Substrate is bound at residue Arg139. Gln156 lines the ATP pocket.

This sequence belongs to the shikimate kinase family. In terms of assembly, monomer. Requires Mg(2+) as cofactor.

The protein localises to the cytoplasm. It carries out the reaction shikimate + ATP = 3-phosphoshikimate + ADP + H(+). It functions in the pathway metabolic intermediate biosynthesis; chorismate biosynthesis; chorismate from D-erythrose 4-phosphate and phosphoenolpyruvate: step 5/7. Catalyzes the specific phosphorylation of the 3-hydroxyl group of shikimic acid using ATP as a cosubstrate. In Thiobacillus denitrificans (strain ATCC 25259 / T1), this protein is Shikimate kinase.